The sequence spans 544 residues: Putative ligase Rv1013 (544 aa).

An Isoglutamyl lysine isopeptide (Lys-Gln) (interchain with Q-Cter in protein Pup) cross-link involves residue Lys-528.

It belongs to the ATP-dependent AMP-binding enzyme family. Post-translationally, pupylated at Lys-528 by the prokaryotic ubiquitin-like protein Pup, which probably leads to its degradation by the proteasome.

The protein is Putative ligase Rv1013 (pks16) of Mycobacterium tuberculosis (strain ATCC 25618 / H37Rv).